The following is a 160-amino-acid chain: Eosinophil cationic protein (160 aa).

Residues 1-27 (MVPKLFTSQICLLLLLGLMGVEGSLHA) form the signal peptide. Positions 28–72 (RPPQFTKAQWFAIQHINVNPPRCTIAMRVINNYQRRCKNQNTFLR) are required for nearly all of the bactericidal activities; partially involved in LPS-binding. H42 serves as the catalytic Proton acceptor. 4 cysteine pairs are disulfide-bonded: C50/C110, C64/C123, C82/C138, and C89/C98. Y60 bears the 3'-nitrotyrosine mark. 65-69 (KNQNT) contributes to the substrate binding site. Residues N92 and N119 are each glycosylated (N-linked (GlcNAc...) asparagine). H155 acts as the Proton donor in catalysis.

It belongs to the pancreatic ribonuclease family. As to quaternary structure, interacts with bacterial lipopolysaccharide (LPS) and lipoteichoic acid (LTA). In vitro interacts with phospholipid bilayers.

Its subcellular location is the secreted. Its function is as follows. Cytotoxin and helminthotoxin with low-efficiency ribonuclease activity. Possesses a wide variety of biological activities. Exhibits antibacterial activity. This is Eosinophil cationic protein (RNASE3) from Macaca fascicularis (Crab-eating macaque).